The sequence spans 392 residues: Formate-dependent phosphoribosylglycinamide formyltransferase (392 aa).

N(1)-(5-phospho-beta-D-ribosyl)glycinamide contacts are provided by residues 22-23 and Glu82; that span reads EL. Residues Arg114, Lys155, 160-165, 195-198, and Glu203 contribute to the ATP site; these read SSGKGQ and EGVV. Residues 119–308 form the ATP-grasp domain; sequence RLAAEELWVP…EFALHVRAFL (190 aa). The Mg(2+) site is built by Glu267 and Glu279. Residues Asp286, Lys355, and 362 to 363 each bind N(1)-(5-phospho-beta-D-ribosyl)glycinamide; that span reads RR.

The protein belongs to the PurK/PurT family. In terms of assembly, homodimer.

The catalysed reaction is N(1)-(5-phospho-beta-D-ribosyl)glycinamide + formate + ATP = N(2)-formyl-N(1)-(5-phospho-beta-D-ribosyl)glycinamide + ADP + phosphate + H(+). The protein operates within purine metabolism; IMP biosynthesis via de novo pathway; N(2)-formyl-N(1)-(5-phospho-D-ribosyl)glycinamide from N(1)-(5-phospho-D-ribosyl)glycinamide (formate route): step 1/1. In terms of biological role, involved in the de novo purine biosynthesis. Catalyzes the transfer of formate to 5-phospho-ribosyl-glycinamide (GAR), producing 5-phospho-ribosyl-N-formylglycinamide (FGAR). Formate is provided by PurU via hydrolysis of 10-formyl-tetrahydrofolate. This chain is Formate-dependent phosphoribosylglycinamide formyltransferase, found in Erwinia tasmaniensis (strain DSM 17950 / CFBP 7177 / CIP 109463 / NCPPB 4357 / Et1/99).